A 695-amino-acid chain; its full sequence is Protein ACTIVITY OF BC1 COMPLEX KINASE 7, chloroplastic (695 aa).

Residues 259–589 (EFEEQPIAAA…VQEIRKQADD (331 aa)) enclose the Protein kinase domain. ATP-binding positions include 265-273 (IAAASLGQV) and K287. D421 serves as the catalytic Proton acceptor. The next 2 membrane-spanning stretches (helical) occupy residues 633-653 (TILQMATMYTVLGGTLLNIGV) and 659-679 (GSQLVANGSFIGAGIFMLLVL).

This sequence belongs to the protein kinase superfamily. ADCK protein kinase family. As to expression, mostly expressed in leaves and flowers, and, to a lower extent, in roots.

Its subcellular location is the plastid. It localises to the chloroplast thylakoid membrane. It is found in the chloroplast. The protein resides in the plastoglobule. The catalysed reaction is L-seryl-[protein] + ATP = O-phospho-L-seryl-[protein] + ADP + H(+). It carries out the reaction L-threonyl-[protein] + ATP = O-phospho-L-threonyl-[protein] + ADP + H(+). Involved in resistance to oxidative stress. Influences responses to reactive oxygen species (ROS) production. Regulates plastoglobules formation in thylakoids. Together with OSA1, regulates iron distribution within the chloroplast and mediates the oxidative stress response. Together with ABC1K8, influences chloroplast lipid synthesis/accumulation and modulates chloroplast membrane composition in response to stress. This Arabidopsis thaliana (Mouse-ear cress) protein is Protein ACTIVITY OF BC1 COMPLEX KINASE 7, chloroplastic.